A 287-amino-acid chain; its full sequence is Succinate--CoA ligase [ADP-forming] subunit alpha 2 (287 aa).

Residues 17-20 (TGYQ), Lys-43, and 96-98 (ITE) contribute to the CoA site. Tyr-159 is a substrate binding site. His-246 (tele-phosphohistidine intermediate) is an active-site residue.

This sequence belongs to the succinate/malate CoA ligase alpha subunit family. Heterotetramer of two alpha and two beta subunits.

The catalysed reaction is succinate + ATP + CoA = succinyl-CoA + ADP + phosphate. It catalyses the reaction GTP + succinate + CoA = succinyl-CoA + GDP + phosphate. The protein operates within carbohydrate metabolism; tricarboxylic acid cycle; succinate from succinyl-CoA (ligase route): step 1/1. Its function is as follows. Succinyl-CoA synthetase functions in the citric acid cycle (TCA), coupling the hydrolysis of succinyl-CoA to the synthesis of either ATP or GTP and thus represents the only step of substrate-level phosphorylation in the TCA. The alpha subunit of the enzyme binds the substrates coenzyme A and phosphate, while succinate binding and nucleotide specificity is provided by the beta subunit. In Archaeoglobus fulgidus (strain ATCC 49558 / DSM 4304 / JCM 9628 / NBRC 100126 / VC-16), this protein is Succinate--CoA ligase [ADP-forming] subunit alpha 2.